Consider the following 284-residue polypeptide: Bifunctional protein FolD (284 aa).

Residues 165–167 and S190 each bind NADP(+); that span reads GRS.

It belongs to the tetrahydrofolate dehydrogenase/cyclohydrolase family. Homodimer.

It catalyses the reaction (6R)-5,10-methylene-5,6,7,8-tetrahydrofolate + NADP(+) = (6R)-5,10-methenyltetrahydrofolate + NADPH. The catalysed reaction is (6R)-5,10-methenyltetrahydrofolate + H2O = (6R)-10-formyltetrahydrofolate + H(+). It functions in the pathway one-carbon metabolism; tetrahydrofolate interconversion. Its function is as follows. Catalyzes the oxidation of 5,10-methylenetetrahydrofolate to 5,10-methenyltetrahydrofolate and then the hydrolysis of 5,10-methenyltetrahydrofolate to 10-formyltetrahydrofolate. This is Bifunctional protein FolD from Streptococcus mutans serotype c (strain ATCC 700610 / UA159).